Reading from the N-terminus, the 1954-residue chain is Chromodomain-helicase-DNA-binding protein 5 (1954 aa).

Disordered regions lie at residues 1-134 (MRGP…PKSS) and 225-338 (PLAV…GDGY). Acidic residues-rich tracts occupy residues 17-37 (EEME…EAFD) and 72-90 (NDEL…ESEG). Over residues 96-115 (NKKKKKKLKDKKEKKAKRKK) the composition is skewed to basic residues. Over residues 227 to 237 (AVSPPQVPQPV) the composition is skewed to pro residues. Residues 251 to 272 (GVRKKIKGSKDGKKKGKGKKTA) are compositionally biased toward basic residues. Positions 291–301 (SEEDEREESDF) are enriched in acidic residues. Positions 321 to 330 (KKSKRRRKKK) are enriched in basic residues. 2 PHD-type zinc fingers span residues 343 to 390 (QDYC…CEKE) and 416 to 463 (MEFC…CTCP). Residues 343–653 (QDYCEVCQQG…HRELMLGEDT (311 aa)) form a histone-binding region. In terms of domain architecture, Chromo 1 spans 497–554 (LPPPKPLEGIPEREFFVKWAGLSYWHCSWVKELQLELYHTVMYRNYQRKNDMDEPPPF). A disordered region spans residues 549 to 571 (DEPPPFDYGSGDEDGKSEKRKNK). A compositionally biased stretch (basic and acidic residues) spans 561–571 (EDGKSEKRKNK). In terms of domain architecture, Chromo 2 spans 592–653 (MMIHRILNHS…HRELMLGEDT (62 aa)). The region spanning 712–896 (RFSWAQGTDT…FHLLNFLTPE (185 aa)) is the Helicase ATP-binding domain. Residue 725–732 (DEMGLGKT) coordinates ATP. The DEAH box signature appears at 847 to 850 (DEAH). In terms of domain architecture, Helicase C-terminal spans 1028–1193 (LLQKMLKKLR…MTKQELDDIL (166 aa)). 5 disordered regions span residues 1209–1253 (MSQG…EDSS), 1351–1411 (YNDA…LPPL), 1524–1564 (YSTP…APLG), 1597–1640 (AALD…REEV), and 1658–1696 (SRGD…KKED). Composition is skewed to acidic residues over residues 1355-1366 (SQEDQEWQDELS) and 1376-1385 (SEDEDEDFEE). At glutamine 1390 the chain carries N5-methylglutamine. A Phosphoserine modification is found at serine 1554. The segment covering 1554-1564 (SPAHLLPAPLG) has biased composition (low complexity). Composition is skewed to basic and acidic residues over residues 1600–1627 (DRVE…ETEK) and 1658–1678 (SRGD…KEPI).

The protein belongs to the SNF2/RAD54 helicase family. Component of the nucleosome remodeling and deacetylase (NuRD) repressor complex, composed of core proteins MTA1, MTA2, MTA3, RBBP4, RBBP7, HDAC1, HDAC2, MBD2, MBD3, and peripherally associated proteins CDK2AP1, CDK2AP2, GATAD2A, GATAD2B, CHD3, CHD4 and CHD5. The exact stoichiometry of the NuRD complex is unknown, and some subunits such as MBD2 and MBD3, GATAD2A and GATAD2B, and CHD3, CHD4 and CHD5 define mutually exclusive NuRD complexes. Interacts with HDAC2. In terms of processing, methylated at Gln-1390 by N6AMT1. As to expression, preferentially expressed in total brain, fetal brain, and cerebellum. It is also moderately expressed in the adrenal gland and detected in testis.

It localises to the nucleus. The protein localises to the chromosome. It carries out the reaction ATP + H2O = ADP + phosphate + H(+). In terms of biological role, ATP-dependent chromatin-remodeling factor that binds DNA through histones and regulates gene transcription. May specifically recognize and bind trimethylated 'Lys-27' (H3K27me3) and non-methylated 'Lys-4' of histone H3. Acts as a component of the histone deacetylase NuRD complex which participates in the remodeling of chromatin. Plays a role in the development of the nervous system by activating the expression of genes promoting neuron terminal differentiation. In parallel, it may also positively regulate the trimethylation of histone H3 at 'Lys-27' thereby specifically repressing genes that promote the differentiation into non-neuronal cell lineages. Regulates the expression of genes involved in cell proliferation and differentiation. Downstream activated genes may include CDKN2A that positively regulates the p53/TP53 pathway, which in turn, prevents cell proliferation. In spermatogenesis, it probably regulates histone hyperacetylation and the replacement of histones by transition proteins in chromatin, a crucial step in the condensation of spermatid chromatin and the production of functional spermatozoa. This is Chromodomain-helicase-DNA-binding protein 5 from Homo sapiens (Human).